The sequence spans 66 residues: Large ribosomal subunit protein uL29 (66 aa).

Belongs to the universal ribosomal protein uL29 family.

This Sinorhizobium fredii (strain NBRC 101917 / NGR234) protein is Large ribosomal subunit protein uL29.